Here is a 200-residue protein sequence, read N- to C-terminus: LHFPL tetraspan subfamily member 6 protein (200 aa).

The signal sequence occupies residues 1–23 (MASSLTCTGVIWALLSFLSAATS). The next 3 membrane-spanning stretches (helical) occupy residues 84–104 (ICTIVTGLGCGLLLLVALTAL), 123–143 (GIQFLGGLLIGAGCALYPLGW), and 166–186 (IGWAYYCTGAGAAAAMLLCTW).

It belongs to the LHFP family.

The protein localises to the membrane. This Mus musculus (Mouse) protein is LHFPL tetraspan subfamily member 6 protein.